We begin with the raw amino-acid sequence, 290 residues long: Urease accessory protein UreD (290 aa).

It belongs to the UreD family. As to quaternary structure, ureD, UreF and UreG form a complex that acts as a GTP-hydrolysis-dependent molecular chaperone, activating the urease apoprotein by helping to assemble the nickel containing metallocenter of UreC. The UreE protein probably delivers the nickel.

The protein resides in the cytoplasm. Functionally, required for maturation of urease via the functional incorporation of the urease nickel metallocenter. The chain is Urease accessory protein UreD from Paenarthrobacter aurescens (strain TC1).